The primary structure comprises 164 residues: ATP synthase subunit b (164 aa).

The chain crosses the membrane as a helical span at residues 10-32 (SAAMLMLFVLMVYFLNKFLYTPF).

It belongs to the ATPase B chain family. F-type ATPases have 2 components, F(1) - the catalytic core - and F(0) - the membrane proton channel. F(1) has five subunits: alpha(3), beta(3), gamma(1), delta(1), epsilon(1). F(0) has three main subunits: a(1), b(2) and c(10-14). The alpha and beta chains form an alternating ring which encloses part of the gamma chain. F(1) is attached to F(0) by a central stalk formed by the gamma and epsilon chains, while a peripheral stalk is formed by the delta and b chains.

It localises to the cell inner membrane. In terms of biological role, f(1)F(0) ATP synthase produces ATP from ADP in the presence of a proton or sodium gradient. F-type ATPases consist of two structural domains, F(1) containing the extramembraneous catalytic core and F(0) containing the membrane proton channel, linked together by a central stalk and a peripheral stalk. During catalysis, ATP synthesis in the catalytic domain of F(1) is coupled via a rotary mechanism of the central stalk subunits to proton translocation. Component of the F(0) channel, it forms part of the peripheral stalk, linking F(1) to F(0). This is ATP synthase subunit b from Thermotoga maritima (strain ATCC 43589 / DSM 3109 / JCM 10099 / NBRC 100826 / MSB8).